An 858-amino-acid chain; its full sequence is Potassium channel KOR1 (858 aa).

A disordered region spans residues 1 to 41 (MGRGIGSKRRVEDDDGENMPGRKKKEEEEEEEDDDGEEEYE). Residues 1-102 (MGRGIGSKRR…PDNKWYRLWT (102 aa)) are Cytoplasmic-facing. Positions 27-41 (EEEEEEDDDGEEEYE) are enriched in acidic residues. A helical transmembrane segment spans residues 103–123 (RFILVWAVYSSFFTPLEFGFF). The Extracellular portion of the chain corresponds to 124 to 130 (RGLPRNL). A helical membrane pass occupies residues 131-151 (FFLDIAGQIAFLIDIVLRFFV). Topologically, residues 152–174 (AYRDPDTYRMVHNPTSIALRYCK) are cytoplasmic. A helical transmembrane segment spans residues 175-195 (SSFIFDLLGCFPWDAIYKACG). The Extracellular portion of the chain corresponds to 196–201 (SKEEVR). The helical; Voltage-sensor transmembrane segment at 202–222 (YLLWIRLTRAMKVTEFFRSME) threads the bilayer. The Cytoplasmic portion of the chain corresponds to 223–236 (KDIRINYLFTRIVK). A helical membrane pass occupies residues 237-257 (LIVVELYCTHTAACIFYYLAT). Residues 258–292 (TLPESMEGYTWIGSLQLGDYSYSHFREIDLTKRYM) are Extracellular-facing. The pore-forming intramembrane region spans 293-312 (TSLYFAIVTMATVGYGDIHA). Over 313 to 316 (VNVR) the chain is Extracellular. A helical transmembrane segment spans residues 317–337 (EMIFIMIYVSFDMILGAYLIG). Topologically, residues 338-858 (NMTALIVKGS…GDDGGTEARQ (521 aa)) are cytoplasmic. A nucleoside 3',5'-cyclic phosphate is bound at residue 419–539 (LFKGCSAEFI…RRILSNLSES (121 aa)). ANK repeat units lie at residues 559–592 (KQEA…DPKN), 596–625 (DGRS…DIDL), 629–658 (FGNT…KLSL), 660–689 (NAGS…DPNA), 693–722 (DHRA…SVFA), and 726–756 (WGTT…ELSR). Positions 772–858 (RCSVFPHHPW…GDDGGTEARQ (87 aa)) constitute a KHA domain.

The protein belongs to the potassium channel family. Plant (TC 1.A.1.4) subfamily.

Its subcellular location is the membrane. In terms of biological role, probable outward-rectifying potassium channel. This is Potassium channel KOR1 from Oryza sativa subsp. japonica (Rice).